Here is a 193-residue protein sequence, read N- to C-terminus: uncharacterized protein (193 aa).

This is an uncharacterized protein from Haemophilus influenzae (strain ATCC 51907 / DSM 11121 / KW20 / Rd).